The primary structure comprises 162 residues: Transcription elongation factor GreB (162 aa).

Residues 52-76 (GKRRLREIDRRIRFLSKRLEALQII) adopt a coiled-coil conformation.

Belongs to the GreA/GreB family. GreB subfamily.

Necessary for efficient RNA polymerase transcription elongation past template-encoded arresting sites. The arresting sites in DNA have the property of trapping a certain fraction of elongating RNA polymerases that pass through, resulting in locked ternary complexes. Cleavage of the nascent transcript by cleavage factors such as GreA or GreB allows the resumption of elongation from the new 3'terminus. GreB releases sequences of up to 9 nucleotides in length. The sequence is that of Transcription elongation factor GreB from Haemophilus ducreyi (strain 35000HP / ATCC 700724).